Reading from the N-terminus, the 137-residue chain is Bombinin-like peptides 1 (137 aa).

The signal sequence occupies residues 1 to 18; the sequence is MNFKYIVAVSILIASAYA. The residue at position 70 (Asn-70) is an Asparagine amide. The segment at 91-112 is disordered; sequence LDSFEHPEEASEKETRGFNQEE. Ile-118 bears the D-allo-isoleucine mark. Ile-136 is modified (isoleucine amide).

Belongs to the bombinin family. As to expression, expressed by the skin glands.

Its subcellular location is the secreted. Functionally, has antimicrobial activity, but no hemolytic activity. Preliminary evidence indicates that this peptide does not lyse and thus kill the bacteria by its antimicrobial activity. In terms of biological role, bombinin H has antibacterial and hemolytic activity. This Bombina variegata (Yellow-bellied toad) protein is Bombinin-like peptides 1.